The sequence spans 94 residues: Small ribosomal subunit protein uS17 (94 aa).

The protein belongs to the universal ribosomal protein uS17 family. In terms of assembly, part of the 30S ribosomal subunit.

One of the primary rRNA binding proteins, it binds specifically to the 5'-end of 16S ribosomal RNA. This is Small ribosomal subunit protein uS17 from Streptomyces avermitilis (strain ATCC 31267 / DSM 46492 / JCM 5070 / NBRC 14893 / NCIMB 12804 / NRRL 8165 / MA-4680).